We begin with the raw amino-acid sequence, 454 residues long: Adenosylmethionine-8-amino-7-oxononanoate aminotransferase (454 aa).

Position 119–120 (119–120) interacts with pyridoxal 5'-phosphate; it reads GA. Tyr152 contacts substrate. Asp257 serves as a coordination point for pyridoxal 5'-phosphate. Residues Lys286, Gly321, and Arg416 each coordinate substrate. Lys286 carries the N6-(pyridoxal phosphate)lysine modification.

This sequence belongs to the class-III pyridoxal-phosphate-dependent aminotransferase family. BioA subfamily. In terms of assembly, homodimer. Pyridoxal 5'-phosphate is required as a cofactor.

Its subcellular location is the cytoplasm. It carries out the reaction (8S)-8-amino-7-oxononanoate + S-adenosyl-L-methionine = S-adenosyl-4-methylsulfanyl-2-oxobutanoate + (7R,8S)-7,8-diammoniononanoate. It functions in the pathway cofactor biosynthesis; biotin biosynthesis; 7,8-diaminononanoate from 8-amino-7-oxononanoate (SAM route): step 1/1. Catalyzes the transfer of the alpha-amino group from S-adenosyl-L-methionine (SAM) to 7-keto-8-aminopelargonic acid (KAPA) to form 7,8-diaminopelargonic acid (DAPA). It is the only aminotransferase known to utilize SAM as an amino donor. The sequence is that of Adenosylmethionine-8-amino-7-oxononanoate aminotransferase from Anoxybacillus flavithermus (strain DSM 21510 / WK1).